The chain runs to 448 residues: Signal recognition particle 54 kDa protein (448 aa).

GTP contacts are provided by residues 107–114 (GIQGSGKT), 189–193 (DTAGR), and 247–250 (TKLD).

It belongs to the GTP-binding SRP family. SRP54 subfamily. Part of the signal recognition particle protein translocation system, which is composed of SRP and FtsY. Archaeal SRP consists of a 7S RNA molecule of 300 nucleotides and two protein subunits: SRP54 and SRP19.

Its subcellular location is the cytoplasm. The catalysed reaction is GTP + H2O = GDP + phosphate + H(+). Its function is as follows. Involved in targeting and insertion of nascent membrane proteins into the cytoplasmic membrane. Binds to the hydrophobic signal sequence of the ribosome-nascent chain (RNC) as it emerges from the ribosomes. The SRP-RNC complex is then targeted to the cytoplasmic membrane where it interacts with the SRP receptor FtsY. This chain is Signal recognition particle 54 kDa protein, found in Thermococcus gammatolerans (strain DSM 15229 / JCM 11827 / EJ3).